The chain runs to 213 residues: Motile sperm domain-containing protein 1 (213 aa).

An MSP domain is found at 16–143 (PVFVFPTELI…KEHLTESVFF (128 aa)). Transmembrane regions (helical) follow at residues 159-179 (SLLTVFLGVVCIAALMLPTLG) and 191-211 (LSVNQKLVAAYILGLITMAIL). Residues 205–208 (LITM) carry the Nuclear export signal motif.

Widely expressed. Shows highest expression in ribs, and slightly lower levels of expression in heart, kidney, muscle, thymus, calvariae and lung. Also detected at low levels in spleen and liver.

The protein resides in the endoplasmic reticulum membrane. Its subcellular location is the golgi apparatus membrane. Plays a role in differentiation and/or proliferation of mesenchymal stem cells. Proposed to be involved in epithelial-to-mesenchymal transition (EMT). However, another study suggests that it is not required for EMT or stem cell self-renewal and acts during later stages of differentiation. The sequence is that of Motile sperm domain-containing protein 1 (Mospd1) from Mus musculus (Mouse).